A 235-amino-acid polypeptide reads, in one-letter code: Ubiquinone/menaquinone biosynthesis C-methyltransferase UbiE (235 aa).

The S-adenosyl-L-methionine site is built by T60, D81, and S126.

It belongs to the class I-like SAM-binding methyltransferase superfamily. MenG/UbiE family.

It catalyses the reaction a 2-demethylmenaquinol + S-adenosyl-L-methionine = a menaquinol + S-adenosyl-L-homocysteine + H(+). The catalysed reaction is a 2-methoxy-6-(all-trans-polyprenyl)benzene-1,4-diol + S-adenosyl-L-methionine = a 5-methoxy-2-methyl-3-(all-trans-polyprenyl)benzene-1,4-diol + S-adenosyl-L-homocysteine + H(+). It functions in the pathway quinol/quinone metabolism; menaquinone biosynthesis; menaquinol from 1,4-dihydroxy-2-naphthoate: step 2/2. The protein operates within cofactor biosynthesis; ubiquinone biosynthesis. In terms of biological role, methyltransferase required for the conversion of demethylmenaquinol (DMKH2) to menaquinol (MKH2) and the conversion of 2-polyprenyl-6-methoxy-1,4-benzoquinol (DDMQH2) to 2-polyprenyl-3-methyl-6-methoxy-1,4-benzoquinol (DMQH2). In Citrifermentans bemidjiense (strain ATCC BAA-1014 / DSM 16622 / JCM 12645 / Bem) (Geobacter bemidjiensis), this protein is Ubiquinone/menaquinone biosynthesis C-methyltransferase UbiE.